The sequence spans 89 residues: Acyl carrier protein MbtL (89 aa).

One can recognise a Carrier domain in the interval Glu7–Val82. O-(pantetheine 4'-phosphoryl)serine is present on Ser42.

In terms of processing, 4'-phosphopantetheine is transferred from CoA to a specific serine of apo-ACP, leading to the activated holo-ACP form.

It localises to the cytoplasm. The protein operates within siderophore biosynthesis; mycobactin biosynthesis. In terms of biological role, acyl carrier protein involved in the formation of acyl-S-ACP intermediates within the mycobactin biosynthesis process. The polypeptide is Acyl carrier protein MbtL (mbtL) (Mycobacterium sp. (strain MCS)).